The following is a 908-amino-acid chain: Probable serine/threonine-protein kinase DDB_G0278521 (908 aa).

The Extracellular portion of the chain corresponds to 1 to 153; sequence MSNNKIIESL…RGEKLSTLDR (153 aa). A helical membrane pass occupies residues 154 to 174; that stretch reads IICFSIIYSQDQILLFLLNFI. Residues 175–908 lie on the Cytoplasmic side of the membrane; the sequence is LSNINCNNNN…SDQNDSDLYD (734 aa). 5 ANK repeats span residues 258–289, 300–326, 330–361, 362–391, and 395–424; these read LKVY…NVYN, TNRS…NIHD, KGML…ALDQ, SNNT…RLSI, and NGRY…KMNS. Residues 461–472 show a composition bias toward low complexity; it reads NSNNLTNSNSSS. The tract at residues 461 to 491 is disordered; sequence NSNNLTNSNSSSVGGLRISNGGNTQQQSIQI. The segment covering 480–490 has biased composition (polar residues); it reads NGGNTQQQSIQ. The stretch at 495 to 524 is one ANK 6 repeat; that stretch reads ENNTPIDLLVLNNHFTIAIELLKYEGYIVG. Positions 530–817 constitute a Protein kinase domain; the sequence is FKTARKIGAG…LPIANIPKFL (288 aa). Residues 536 to 544 and lysine 557 each bind ATP; that span reads IGAGAFGDV. The active-site Proton acceptor is aspartate 677.

It belongs to the protein kinase superfamily. TKL Ser/Thr protein kinase family.

The protein resides in the membrane. The enzyme catalyses L-seryl-[protein] + ATP = O-phospho-L-seryl-[protein] + ADP + H(+). It carries out the reaction L-threonyl-[protein] + ATP = O-phospho-L-threonyl-[protein] + ADP + H(+). This is Probable serine/threonine-protein kinase DDB_G0278521 from Dictyostelium discoideum (Social amoeba).